The primary structure comprises 81 residues: Protein Vpu (81 aa).

Over 1–7 (MQPLVIA) the chain is Extracellular. A helical membrane pass occupies residues 8-28 (AIVALVVAGIIAIVVWSIVFI). The Cytoplasmic portion of the chain corresponds to 29-81 (EYRKIRRQRKIDKLIDRISERAEDSGNESEGDQEELSALVGMGHDAPWVINDL). A phosphoserine; by host CK2 mark is found at Ser53 and Ser57.

Belongs to the HIV-1 VPU protein family. Homopentamer. Interacts with host CD4 and BRTC; these interactions induce proteasomal degradation of CD4. Interacts with host BST2; this interaction leads to the degradation of host BST2. Interacts with host FBXW11. Interacts with host AP1M1; this interaction plays a role in the mistrafficking and subsequent degradation of host BST2. Interacts with host RANBP2; this interaction allows Vpu to down-regulate host BLM sumoylation. Phosphorylated by host CK2. This phosphorylation is necessary for interaction with human BTRC and degradation of CD4.

It localises to the host membrane. Ion channel activity is inhibited by hexamethylene amiloride in vitro. In terms of biological role, enhances virion budding by targeting host CD4 and Tetherin/BST2 to proteasome degradation. Degradation of CD4 prevents any unwanted premature interactions between viral Env and its host receptor CD4 in the endoplasmic reticulum. Degradation of antiretroviral protein Tetherin/BST2 is important for virion budding, as BST2 tethers new viral particles to the host cell membrane. Mechanistically, Vpu bridges either CD4 or BST2 to BTRC, a substrate recognition subunit of the Skp1/Cullin/F-box protein E3 ubiquitin ligase, induces their ubiquitination and subsequent proteasomal degradation. The alteration of the E3 ligase specificity by Vpu seems to promote the degradation of host IKBKB, leading to NF-kappa-B down-regulation and subsequent apoptosis. Acts as a viroporin that forms an oligomeric ion channel in membranes. Modulates the host DNA repair mechanisms to promote degradation of nuclear viral cDNA in cells that are already productively infected in order to suppress immune sensing and proviral hyper-integration (superinfection). Manipulates PML-NBs and modulates SUMOylation of host BLM protein thereby enhancing its DNA-end processing activity toward viral unintegrated linear DNA. Also inhibits RAD52-mediated homologous repair of viral cDNA, preventing the generation of dead-end circular forms of single copies of the long terminal repeat and permitting sustained nucleolytic attack. In Homo sapiens (Human), this protein is Protein Vpu.